The chain runs to 130 residues: ER membrane protein complex subunit 5 (130 aa).

Topologically, residues 1–3 are cytoplasmic; it reads MAS. A helical transmembrane segment spans residues 4-22; sequence SFWKGVVGIGLFALAHAAF. At 23–43 the chain is on the lumenal side; that stretch reads SAAQHRSYMRLTEKENETLPI. A helical membrane pass occupies residues 44-63; the sequence is DIVLQTLLSFVITCYGIVHI. Residues 64 to 130 lie on the Cytoplasmic side of the membrane; sequence SGEFKDMDAS…LRLRKLENFH (67 aa).

This sequence belongs to the membrane magnesium transporter (TC 1.A.67) family. As to quaternary structure, component of the ER membrane protein complex (EMC).

The protein resides in the endoplasmic reticulum membrane. It is found in the golgi apparatus membrane. Its subcellular location is the early endosome membrane. Part of the endoplasmic reticulum membrane protein complex (EMC) that enables the energy-independent insertion into endoplasmic reticulum membranes of newly synthesized membrane proteins. Preferentially accommodates proteins with transmembrane domains that are weakly hydrophobic or contain destabilizing features such as charged and aromatic residues. Involved in the cotranslational insertion of multi-pass membrane proteins in which stop-transfer membrane-anchor sequences become ER membrane spanning helices. It is also required for the post-translational insertion of tail-anchored/TA proteins in endoplasmic reticulum membranes. By mediating the proper cotranslational insertion of N-terminal transmembrane domains in an N-exo topology, with translocated N-terminus in the lumen of the ER, controls the topology of multi-pass membrane proteins like the G protein-coupled receptors. By regulating the insertion of various proteins in membranes, it is indirectly involved in many cellular processes. May be involved in Mg(2+) transport. This chain is ER membrane protein complex subunit 5, found in Danio rerio (Zebrafish).